Consider the following 151-residue polypeptide: Large ribosomal subunit protein bL9 (151 aa).

This sequence belongs to the bacterial ribosomal protein bL9 family.

Its function is as follows. Binds to the 23S rRNA. The chain is Large ribosomal subunit protein bL9 from Mycolicibacterium smegmatis (strain ATCC 700084 / mc(2)155) (Mycobacterium smegmatis).